The chain runs to 320 residues: tRNA dimethylallyltransferase (320 aa).

17-24 (GPTASGKT) provides a ligand contact to ATP. Substrate is bound at residue 19-24 (TASGKT). 3 interaction with substrate tRNA regions span residues 42–45 (DSAL), 166–170 (QRIQR), and 249–254 (RCVGYR).

Belongs to the IPP transferase family. In terms of assembly, monomer. The cofactor is Mg(2+).

The catalysed reaction is adenosine(37) in tRNA + dimethylallyl diphosphate = N(6)-dimethylallyladenosine(37) in tRNA + diphosphate. In terms of biological role, catalyzes the transfer of a dimethylallyl group onto the adenine at position 37 in tRNAs that read codons beginning with uridine, leading to the formation of N6-(dimethylallyl)adenosine (i(6)A). The protein is tRNA dimethylallyltransferase of Herminiimonas arsenicoxydans.